We begin with the raw amino-acid sequence, 202 residues long: Myosin regulatory light chain 10 (202 aa).

The disordered stretch occupies residues 1–21 (MGQSSLDHGVQGPVAGTGDFG). 3 EF-hand domains span residues 60–95 (SQIQ…LGRI), 130–165 (DPEE…QADR), and 166–201 (FSEE…GEEK). The Ca(2+) site is built by Asp73, Asn75, Asp77, and Asp84.

Myosin is a hexamer of 2 heavy chains and 4 light chains. As to expression, specifically expressed in precursor B- and T-lymphocytes.

The chain is Myosin regulatory light chain 10 (Myl10) from Mus musculus (Mouse).